A 310-amino-acid polypeptide reads, in one-letter code: Proline iminopeptidase (310 aa).

The AB hydrolase-1 domain occupies 33–290 (PVIFLHGGPG…RVVQAGHRAF (258 aa)). Ser-107 (nucleophile) is an active-site residue. Asp-260 is an active-site residue. Residue His-287 is the Proton donor of the active site.

Belongs to the peptidase S33 family.

It localises to the cytoplasm. It catalyses the reaction Release of N-terminal proline from a peptide.. Specifically catalyzes the removal of N-terminal proline residues from peptides. This Neisseria meningitidis serogroup B (strain ATCC BAA-335 / MC58) protein is Proline iminopeptidase (pip).